The sequence spans 815 residues: Phenylalanine--tRNA ligase beta subunit (815 aa).

The tRNA-binding domain occupies Ala39–Gly153. A B5 domain is found at Lys414–Ala498. Asp476, Asp482, Glu485, and Glu486 together coordinate Mg(2+). Positions Pro721–Arg814 constitute an FDX-ACB domain.

This sequence belongs to the phenylalanyl-tRNA synthetase beta subunit family. Type 1 subfamily. In terms of assembly, tetramer of two alpha and two beta subunits. Requires Mg(2+) as cofactor.

The protein localises to the cytoplasm. The enzyme catalyses tRNA(Phe) + L-phenylalanine + ATP = L-phenylalanyl-tRNA(Phe) + AMP + diphosphate + H(+). In Prochlorococcus marinus (strain MIT 9313), this protein is Phenylalanine--tRNA ligase beta subunit.